A 234-amino-acid chain; its full sequence is Orotidine 5'-phosphate decarboxylase (234 aa).

Residues Asp-14, Lys-36, 63–72 (DLKFHDIPNT), Thr-123, Arg-184, Gln-193, Gly-213, and Arg-214 contribute to the substrate site. Residue Lys-65 is the Proton donor of the active site.

Belongs to the OMP decarboxylase family. Type 1 subfamily. In terms of assembly, homodimer.

It catalyses the reaction orotidine 5'-phosphate + H(+) = UMP + CO2. It functions in the pathway pyrimidine metabolism; UMP biosynthesis via de novo pathway; UMP from orotate: step 2/2. Its function is as follows. Catalyzes the decarboxylation of orotidine 5'-monophosphate (OMP) to uridine 5'-monophosphate (UMP). The chain is Orotidine 5'-phosphate decarboxylase from Psychromonas ingrahamii (strain DSM 17664 / CCUG 51855 / 37).